Consider the following 118-residue polypeptide: U16-barytoxin-Tl1c (118 aa).

The signal sequence occupies residues 1–16 (MKTIIVFLSFLVLVLA). A propeptide spanning residues 17 to 76 (TKFGDANEGVNREQTKEVIQNEFRGDFLNEMAAMSLLQQLEAIESALLEKEADRNSRQKR) is cleaved from the precursor. 3 disulfides stabilise this stretch: Cys-77–Cys-92, Cys-84–Cys-97, and Cys-91–Cys-112.

Belongs to the neurotoxin 14 (magi-1) family. 06 (ICK-Trit) subfamily. Expressed by the venom gland.

It is found in the secreted. Its function is as follows. Ion channel inhibitor. This Trittame loki (Brush-footed trapdoor spider) protein is U16-barytoxin-Tl1c.